The following is a 145-amino-acid chain: Late embryogenesis abundant protein D-11 (145 aa).

Residues 1 to 18 (MAHFQNQYSAPEVTQTDA) show a composition bias toward polar residues. The segment at 1–136 (MAHFQNQYSA…EAPWSPQPLI (136 aa)) is disordered. The span at 47–57 (GHHHGGHHGLH) shows a compositional bias: basic residues. The span at 58-68 (RTGSSSSSSSS) shows a compositional bias: low complexity. Residues 82 to 96 (KERLKEKIPGNKEHQ) show a composition bias toward basic and acidic residues. Over residues 97–107 (SQATSTTTPGQ) the composition is skewed to polar residues.

This sequence belongs to the plant dehydrin family.

Its function is as follows. LEA protein are late embryogenesis abundant in higher plant seed embryos. There are two subsets of LEA proteins (5a, and 5b), the first ones are expressed when the cotyledon weight reach 80 mg and the second set are expressed above 100 mg. The function of those proteins is not known. The polypeptide is Late embryogenesis abundant protein D-11 (Gossypium hirsutum (Upland cotton)).